The sequence spans 429 residues: Ribosomal RNA small subunit methyltransferase B (429 aa).

Residues 254–260 (CAAPGGK), aspartate 277, aspartate 303, and aspartate 322 each bind S-adenosyl-L-methionine. Cysteine 375 acts as the Nucleophile in catalysis.

The protein belongs to the class I-like SAM-binding methyltransferase superfamily. RsmB/NOP family.

Its subcellular location is the cytoplasm. The catalysed reaction is cytidine(967) in 16S rRNA + S-adenosyl-L-methionine = 5-methylcytidine(967) in 16S rRNA + S-adenosyl-L-homocysteine + H(+). Functionally, specifically methylates the cytosine at position 967 (m5C967) of 16S rRNA. This is Ribosomal RNA small subunit methyltransferase B from Shigella flexneri serotype 5b (strain 8401).